The following is a 367-amino-acid chain: Leu/Ile/Val-binding protein (367 aa).

The signal sequence occupies residues 1-23 (MNMKGKALLAGCIALSLSNMAFA). Residues cysteine 76 and cysteine 101 are joined by a disulfide bond.

The protein belongs to the leucine-binding protein family.

It localises to the periplasm. This protein is a component of the leucine, isoleucine, valine, (threonine) transport system, which is one of the two periplasmic binding protein-dependent transport systems of the high-affinity transport of the branched-chain amino acids. The chain is Leu/Ile/Val-binding protein (livJ) from Citrobacter freundii.